The primary structure comprises 1058 residues: Carbamoyl phosphate synthase large chain (1058 aa).

Residues 1-401 (MPKRTDIKKI…SLLKACRSLE (401 aa)) are carboxyphosphate synthetic domain. ATP is bound by residues arginine 129, arginine 169, glycine 175, glycine 176, lysine 208, isoleucine 210, glutamate 215, glycine 241, isoleucine 242, histidine 243, glutamine 284, and glutamate 298. In terms of domain architecture, ATP-grasp 1 spans 133 to 327 (KALMKALKQP…IAKIAAKIAI (195 aa)). Positions 284, 298, and 300 each coordinate Mg(2+). The Mn(2+) site is built by glutamine 284, glutamate 298, and asparagine 300. The segment at 402 to 546 (IGIYHNECKE…YSTYAFENES (145 aa)) is oligomerization domain. The tract at residues 547–929 (QASPNKSILV…ALYKAFEASY (383 aa)) is carbamoyl phosphate synthetic domain. The region spanning 671-861 (EKALHDINIP…MAQVATKLIL (191 aa)) is the ATP-grasp 2 domain. ATP is bound by residues arginine 707, serine 746, isoleucine 748, glutamate 752, glycine 777, valine 778, histidine 779, serine 780, glutamine 820, and glutamate 832. Residues glutamine 820, glutamate 832, and asparagine 834 each coordinate Mg(2+). Mn(2+) contacts are provided by glutamine 820, glutamate 832, and asparagine 834. In terms of domain architecture, MGS-like spans 930 to 1058 (MHVPDFGNII…ESRSFSIQSL (129 aa)). Residues 930–1058 (MHVPDFGNII…ESRSFSIQSL (129 aa)) are allosteric domain.

This sequence belongs to the CarB family. In terms of assembly, composed of two chains; the small (or glutamine) chain promotes the hydrolysis of glutamine to ammonia, which is used by the large (or ammonia) chain to synthesize carbamoyl phosphate. Tetramer of heterodimers (alpha,beta)4. The cofactor is Mg(2+). Mn(2+) serves as cofactor.

It catalyses the reaction hydrogencarbonate + L-glutamine + 2 ATP + H2O = carbamoyl phosphate + L-glutamate + 2 ADP + phosphate + 2 H(+). The catalysed reaction is hydrogencarbonate + NH4(+) + 2 ATP = carbamoyl phosphate + 2 ADP + phosphate + 2 H(+). The protein operates within amino-acid biosynthesis; L-arginine biosynthesis; carbamoyl phosphate from bicarbonate: step 1/1. It participates in pyrimidine metabolism; UMP biosynthesis via de novo pathway; (S)-dihydroorotate from bicarbonate: step 1/3. In terms of biological role, large subunit of the glutamine-dependent carbamoyl phosphate synthetase (CPSase). CPSase catalyzes the formation of carbamoyl phosphate from the ammonia moiety of glutamine, carbonate, and phosphate donated by ATP, constituting the first step of 2 biosynthetic pathways, one leading to arginine and/or urea and the other to pyrimidine nucleotides. The large subunit (synthetase) binds the substrates ammonia (free or transferred from glutamine from the small subunit), hydrogencarbonate and ATP and carries out an ATP-coupled ligase reaction, activating hydrogencarbonate by forming carboxy phosphate which reacts with ammonia to form carbamoyl phosphate. The sequence is that of Carbamoyl phosphate synthase large chain from Streptococcus uberis (strain ATCC BAA-854 / 0140J).